A 244-amino-acid chain; its full sequence is Pyridoxine 5'-phosphate synthase (244 aa).

Asparagine 7 is a 3-amino-2-oxopropyl phosphate binding site. 9-10 is a binding site for 1-deoxy-D-xylulose 5-phosphate; it reads DH. 3-amino-2-oxopropyl phosphate is bound at residue arginine 18. Histidine 43 serves as the catalytic Proton acceptor. The 1-deoxy-D-xylulose 5-phosphate site is built by arginine 45 and histidine 50. The Proton acceptor role is filled by glutamate 70. Residue threonine 100 coordinates 1-deoxy-D-xylulose 5-phosphate. Histidine 191 functions as the Proton donor in the catalytic mechanism. 3-amino-2-oxopropyl phosphate contacts are provided by residues glycine 192 and 213-214; that span reads GH.

It belongs to the PNP synthase family. Homooctamer; tetramer of dimers.

It localises to the cytoplasm. The catalysed reaction is 3-amino-2-oxopropyl phosphate + 1-deoxy-D-xylulose 5-phosphate = pyridoxine 5'-phosphate + phosphate + 2 H2O + H(+). The protein operates within cofactor biosynthesis; pyridoxine 5'-phosphate biosynthesis; pyridoxine 5'-phosphate from D-erythrose 4-phosphate: step 5/5. In terms of biological role, catalyzes the complicated ring closure reaction between the two acyclic compounds 1-deoxy-D-xylulose-5-phosphate (DXP) and 3-amino-2-oxopropyl phosphate (1-amino-acetone-3-phosphate or AAP) to form pyridoxine 5'-phosphate (PNP) and inorganic phosphate. The protein is Pyridoxine 5'-phosphate synthase of Laribacter hongkongensis (strain HLHK9).